An 82-amino-acid chain; its full sequence is uncharacterized protein (82 aa).

2 helical membrane-spanning segments follow: residues 8 to 28 and 50 to 70; these read LTTA…LPAP and LYTL…YFVL.

It localises to the cell membrane. This is an uncharacterized protein from Escherichia coli (strain K12).